The following is a 450-amino-acid chain: MAGDHAGDQSFYDFLIEEPEMIAPTPPGQFPHQQPISSPNRTSRNTPLRPESTEIETHHHANHPPALPVLGMQLPVPGTVPESSRAQSRASLNLDIDLDLHAPSHPSHLSHGAPHEQEHAHEIQRHRAHSAQSSAGLPPTGFASHLPPASSGPVSLGWNMYHVPPNLHLNANQFNFEVPGHMNVSGHPTHLEHSSTNPNSFHYEHNIVSPSSIHPSTAHFDGEVPSQWDDSLGHGASTPKVRTPSHHVSSNPWAEINEPTGGDNDNLAPVTRPRKPARARRQKKEPRKLSDASQGARSSSTGGTAHSVSDAASPSSTSHQSRASLTSKSASMTSAASTASSRKSKLRSASRTSKNTLDKPNDTAEDRRTRASHNLVEKQYRNRLNAQFESLLHALPEQIRHGDNGGGNGNVDNESEQANDLDRRVSKGEVLEMARRHIEALERERNQLGT.

4 disordered regions span residues 18–87, 99–148, 185–377, and 398–426; these read EPEM…SRAQ, DLHA…HLPP, SGHP…NLVE, and QIRH…RRVS. The span at 31-46 shows a compositional bias: polar residues; that stretch reads PHQQPISSPNRTSRNT. Over residues 101 to 112 the composition is skewed to low complexity; the sequence is HAPSHPSHLSHG. A compositionally biased stretch (basic and acidic residues) spans 113 to 125; that stretch reads APHEQEHAHEIQR. The span at 272-286 shows a compositional bias: basic residues; it reads RPRKPARARRQKKEP. Positions 291–304 are enriched in polar residues; sequence DASQGARSSSTGGT. The segment covering 305–341 has biased composition (low complexity); it reads AHSVSDAASPSSTSHQSRASLTSKSASMTSAASTASS. Over residues 356–377 the composition is skewed to basic and acidic residues; that stretch reads TLDKPNDTAEDRRTRASHNLVE. In terms of domain architecture, bHLH spans 368 to 441; it reads RTRASHNLVE…EMARRHIEAL (74 aa).

In Fusarium culmorum, this protein is Allergen Fus c 3.